The chain runs to 303 residues: Indole-3-glycerol phosphate synthase (303 aa).

This sequence belongs to the TrpC family.

The enzyme catalyses 1-(2-carboxyphenylamino)-1-deoxy-D-ribulose 5-phosphate + H(+) = (1S,2R)-1-C-(indol-3-yl)glycerol 3-phosphate + CO2 + H2O. Its pathway is amino-acid biosynthesis; L-tryptophan biosynthesis; L-tryptophan from chorismate: step 4/5. The sequence is that of Indole-3-glycerol phosphate synthase from Acaryochloris marina (strain MBIC 11017).